The sequence spans 230 residues: Octanoyltransferase (230 aa).

The region spanning P40 to L218 is the BPL/LPL catalytic domain. Residues R82–H89, A149–G151, and G162–A164 each bind substrate. The active-site Acyl-thioester intermediate is the C180.

It belongs to the LipB family.

Its subcellular location is the cytoplasm. The enzyme catalyses octanoyl-[ACP] + L-lysyl-[protein] = N(6)-octanoyl-L-lysyl-[protein] + holo-[ACP] + H(+). Its pathway is protein modification; protein lipoylation via endogenous pathway; protein N(6)-(lipoyl)lysine from octanoyl-[acyl-carrier-protein]: step 1/2. Its function is as follows. Catalyzes the transfer of endogenously produced octanoic acid from octanoyl-acyl-carrier-protein onto the lipoyl domains of lipoate-dependent enzymes. Lipoyl-ACP can also act as a substrate although octanoyl-ACP is likely to be the physiological substrate. This Nostoc punctiforme (strain ATCC 29133 / PCC 73102) protein is Octanoyltransferase.